Consider the following 830-residue polypeptide: Leucine--tRNA ligase (830 aa).

Residues 34–44 (PYPSGNIHMGH) carry the 'HIGH' region motif. Positions 592 to 596 (KMSKS) match the 'KMSKS' region motif. Lys595 is an ATP binding site.

This sequence belongs to the class-I aminoacyl-tRNA synthetase family.

The protein localises to the cytoplasm. It carries out the reaction tRNA(Leu) + L-leucine + ATP = L-leucyl-tRNA(Leu) + AMP + diphosphate. This is Leucine--tRNA ligase from Ehrlichia ruminantium (strain Welgevonden).